Consider the following 1106-residue polypeptide: Communication mutant protein F (1106 aa).

Residues 1 to 28 form the signal peptide; it reads MKIYKKNHFLKILIIFIYLSCNILKVNA. The 127-residue stretch at 254 to 380 folds into the G8 domain; it reads TIWPNGVVPS…YHNTWSKLAS (127 aa). Residues Asn267, Asn306, Asn512, Asn536, Asn677, Asn715, and Asn833 are each glycosylated (N-linked (GlcNAc...) asparagine).

This sequence belongs to the comF family.

The protein localises to the secreted. This chain is Communication mutant protein F (comF-1), found in Dictyostelium discoideum (Social amoeba).